Reading from the N-terminus, the 325-residue chain is Tumor necrosis factor soluble receptor (325 aa).

The N-terminal stretch at 1–16 is a signal peptide; sequence MLRLIALLVCVVYVYG. TNFR-Cys repeat units lie at residues 27–62, 63–104, 105–147, and 148–186; these read KCGG…TVCS, PCED…DRVC, NCST…TLCE, and KCPP…TSCT. Disulfide bonds link Cys28–Cys39, Cys40–Cys53, Cys43–Cys61, Cys64–Cys79, Cys82–Cys96, and Cys86–Cys104. Residue Asn105 is glycosylated (N-linked (GlcNAc...) asparagine; by host). Cystine bridges form between Cys106–Cys120, Cys123–Cys146, Cys129–Cys149, and Cys164–Cys185. N-linked (GlcNAc...) asparagine; by host glycans are attached at residues Asn181, Asn205, and Asn238.

Functionally, binds to TNF-alpha and beta. Probably prevents TNF to reach cellular target and thereby deampening the potential antiviral effects of the cytokine. The sequence is that of Tumor necrosis factor soluble receptor from Oryctolagus cuniculus (Rabbit).